We begin with the raw amino-acid sequence, 177 residues long: Protein SOB FIVE-LIKE 6 (177 aa).

Residues 14–19 (SGWTMY) carry the SOFL-A motif. Disordered stretches follow at residues 37-60 (ETKQ…PYYC) and 78-104 (KSKS…FNSS). An SOFL-B motif is present at residues 47–56 (SMVSDASSGP). Basic residues predominate over residues 79 to 90 (SKSKNKNKNKKK).

The protein belongs to the SOFL plant protein family. In terms of tissue distribution, expressed in seedlings, flowers and siliques. Barely detectable in roots and leaves.

Its subcellular location is the cytoplasm. The protein resides in the nucleus. Its function is as follows. Involved in cytokinin-mediated development. This chain is Protein SOB FIVE-LIKE 6, found in Arabidopsis thaliana (Mouse-ear cress).